The sequence spans 448 residues: Serine/threonine-protein phosphatase 2A regulatory subunit B'' subunit gamma (448 aa).

EF-hand domains follow at residues 268 to 303 (PSAL…TLTC) and 336 to 371 (KEPA…IQEQ). Ca(2+)-binding residues include Asp281, Asp283, Asn285, Met287, and Glu292.

Its subcellular location is the nucleus. It is found in the cytoplasm. Possible role in the regulation of cell death. The protein is Serine/threonine-protein phosphatase 2A regulatory subunit B'' subunit gamma (ppp2r3c) of Xenopus tropicalis (Western clawed frog).